The chain runs to 767 residues: V-set and immunoglobulin domain-containing protein 10-like 2 (767 aa).

A signal peptide spans 1–28 (MVGQRAQHSPVSLLLLIHLCLLHLRASG). Ig-like domains are found at residues 34–140 (PEAP…SHLT), 150–234 (PQVR…AFLD), and 242–324 (PVIT…TTVQ). Cystine bridges form between cysteine 56/cysteine 122, cysteine 169/cysteine 217, and cysteine 268/cysteine 308. N-linked (GlcNAc...) asparagine glycosylation occurs at asparagine 376. 2 consecutive Ig-like domains span residues 399–499 (PALA…LQLE) and 501–593 (PQLD…VLLE). 2 disulfide bridges follow: cysteine 435–cysteine 481 and cysteine 522–cysteine 577. The Fibronectin type-III domain maps to 599–699 (APPNVTISRL…EVKIPADPPF (101 aa)). 2 N-linked (GlcNAc...) asparagine glycosylation sites follow: asparagine 602 and asparagine 628. Residues 704-724 (AVLGAAGTGMVVATVASLLVF) traverse the membrane as a helical segment. The disordered stretch occupies residues 735 to 754 (PRLETPTTTPGLDPAQETTD). Residues 739–754 (TPTTTPGLDPAQETTD) are compositionally biased toward polar residues.

It is found in the membrane. This Homo sapiens (Human) protein is V-set and immunoglobulin domain-containing protein 10-like 2.